A 71-amino-acid chain; its full sequence is ATP synthase subunit c (71 aa).

2 consecutive transmembrane segments (helical) span residues 9 to 29 (MIGY…IFAA) and 49 to 69 (LLGF…AFVI).

This sequence belongs to the ATPase C chain family. In terms of assembly, F-type ATPases have 2 components, F(1) - the catalytic core - and F(0) - the membrane proton channel. F(1) has five subunits: alpha(3), beta(3), gamma(1), delta(1), epsilon(1). F(0) has three main subunits: a(1), b(2) and c(10-14). The alpha and beta chains form an alternating ring which encloses part of the gamma chain. F(1) is attached to F(0) by a central stalk formed by the gamma and epsilon chains, while a peripheral stalk is formed by the delta and b chains.

Its subcellular location is the cell membrane. In terms of biological role, f(1)F(0) ATP synthase produces ATP from ADP in the presence of a proton or sodium gradient. F-type ATPases consist of two structural domains, F(1) containing the extramembraneous catalytic core and F(0) containing the membrane proton channel, linked together by a central stalk and a peripheral stalk. During catalysis, ATP synthesis in the catalytic domain of F(1) is coupled via a rotary mechanism of the central stalk subunits to proton translocation. Its function is as follows. Key component of the F(0) channel; it plays a direct role in translocation across the membrane. A homomeric c-ring of between 10-14 subunits forms the central stalk rotor element with the F(1) delta and epsilon subunits. This Micrococcus luteus (strain ATCC 4698 / DSM 20030 / JCM 1464 / CCM 169 / CCUG 5858 / IAM 1056 / NBRC 3333 / NCIMB 9278 / NCTC 2665 / VKM Ac-2230) (Micrococcus lysodeikticus) protein is ATP synthase subunit c.